The following is a 99-amino-acid chain: Large ribosomal subunit protein bL28 (99 aa).

Belongs to the bacterial ribosomal protein bL28 family.

The polypeptide is Large ribosomal subunit protein bL28 (Rhodospirillum rubrum (strain ATCC 11170 / ATH 1.1.1 / DSM 467 / LMG 4362 / NCIMB 8255 / S1)).